Consider the following 143-residue polypeptide: Ribonuclease P protein component 2 (143 aa).

This sequence belongs to the eukaryotic/archaeal RNase P protein component 2 family. As to quaternary structure, consists of a catalytic RNA component and at least 4-5 protein subunits.

The protein localises to the cytoplasm. The enzyme catalyses Endonucleolytic cleavage of RNA, removing 5'-extranucleotides from tRNA precursor.. Functionally, part of ribonuclease P, a protein complex that generates mature tRNA molecules by cleaving their 5'-ends. This Saccharolobus islandicus (strain L.S.2.15 / Lassen #1) (Sulfolobus islandicus) protein is Ribonuclease P protein component 2.